Reading from the N-terminus, the 635-residue chain is Biosynthetic arginine decarboxylase (635 aa).

Lys-103 is modified (N6-(pyridoxal phosphate)lysine). 283 to 293 (FDVGGGLGVDY) is a binding site for substrate.

The protein belongs to the Orn/Lys/Arg decarboxylase class-II family. SpeA subfamily. Requires Mg(2+) as cofactor. Pyridoxal 5'-phosphate is required as a cofactor.

It carries out the reaction L-arginine + H(+) = agmatine + CO2. It participates in amine and polyamine biosynthesis; agmatine biosynthesis; agmatine from L-arginine: step 1/1. In terms of biological role, catalyzes the biosynthesis of agmatine from arginine. This is Biosynthetic arginine decarboxylase from Proteus mirabilis (strain HI4320).